The following is a 150-amino-acid chain: FAD synthase (150 aa).

ATP-binding positions include 10–11 (VF), 15–18 (HPGH), Asp97, and Tyr124.

Belongs to the archaeal FAD synthase family. As to quaternary structure, homodimer. The cofactor is a divalent metal cation.

The catalysed reaction is FMN + ATP + H(+) = FAD + diphosphate. The protein operates within cofactor biosynthesis; FAD biosynthesis; FAD from FMN: step 1/1. Functionally, catalyzes the transfer of the AMP portion of ATP to flavin mononucleotide (FMN) to produce flavin adenine dinucleotide (FAD) coenzyme. The protein is FAD synthase of Methanopyrus kandleri (strain AV19 / DSM 6324 / JCM 9639 / NBRC 100938).